The chain runs to 255 residues: 1-(5-phosphoribosyl)-5-[(5-phosphoribosylamino)methylideneamino] imidazole-4-carboxamide isomerase (255 aa).

Residue D8 is the Proton acceptor of the active site. D129 functions as the Proton donor in the catalytic mechanism.

This sequence belongs to the HisA/HisF family.

The protein resides in the cytoplasm. The catalysed reaction is 1-(5-phospho-beta-D-ribosyl)-5-[(5-phospho-beta-D-ribosylamino)methylideneamino]imidazole-4-carboxamide = 5-[(5-phospho-1-deoxy-D-ribulos-1-ylimino)methylamino]-1-(5-phospho-beta-D-ribosyl)imidazole-4-carboxamide. It participates in amino-acid biosynthesis; L-histidine biosynthesis; L-histidine from 5-phospho-alpha-D-ribose 1-diphosphate: step 4/9. The protein is 1-(5-phosphoribosyl)-5-[(5-phosphoribosylamino)methylideneamino] imidazole-4-carboxamide isomerase of Prochlorococcus marinus (strain MIT 9211).